An 834-amino-acid chain; its full sequence is Protein Jade-1 (834 aa).

A disordered region spans residues 1–46; it reads MKRGRLPSSSEDSDDNGSLSTTWSQHSRSQHGRSSTCSRPEDRKPS. A compositionally biased stretch (low complexity) spans 24–35; it reads SQHSRSQHGRSS. The segment at 61-81 is interaction with KAT7/HBO1 and histones; that stretch reads DSYQLNPDDYYVLADPWRQEW. Residues 81–189 form an interaction with histones region; the sequence is WEKGVQVPVS…EQRCYDNMNH (109 aa). A Phosphoserine modification is found at serine 90. Threonine 93 is modified (phosphothreonine). A Glycyl lysine isopeptide (Lys-Gly) (interchain with G-Cter in SUMO2) cross-link involves residue lysine 115. The PHD-type 1 zinc-finger motif lies at 204–254; the sequence is DVVCDVCQSPDGEDGNEMVFCDKCNICVHQACYGILKVPEGSWLCRTCALG. A C2HC pre-PHD-type zinc finger spans residues 256–290; that stretch reads QPKCLLCPKKGGAMKPTRSGTKWVHVSCALWIPEV. A PHD-type 2 zinc finger spans residues 314-370; that stretch reads LVCSLCNEKFGASIQCSVKNCRTAFHVTCAFDRGLEMKTILAENDEVKFKSYCPKHS. Residues 367-409 form a disordered region; that stretch reads PKHSSHRKPEEGLGEGAAQENGAPESSPQSPLEPYGSLEPNRE. Lysine 573 participates in a covalent cross-link: Glycyl lysine isopeptide (Lys-Gly) (interchain with G-Cter in SUMO2). 2 disordered regions span residues 589–621 and 676–716; these read HPLKKSHKRDAVQNSSGTEGKTSHKQPGLCGRR and DKSF…GTRK. At serine 603 the chain carries Phosphoserine. The residue at position 609 (lysine 609) is an N6-acetyllysine. 2 positions are modified to phosphoserine: serine 704 and serine 735. Positions 738-819 are disordered; that stretch reads KSWGGFRIPK…EKKCIHASST (82 aa). 2 stretches are compositionally biased toward basic and acidic residues: residues 747-768 and 777-790; these read KKGERQQQGEAHDGACHQHSDC and PAKERAKSRLRADS.

The protein belongs to the JADE family. As to quaternary structure, component of the HBO1 complex composed at least of ING4 or ING5, KAT7/HBO1, MEAF6, and one of JADE1, JADE2 and JADE3. Interacts with NPHP4. In terms of tissue distribution, highly expressed in kidney. Also present in liver (at protein level).

It localises to the nucleus. The protein resides in the chromosome. Its subcellular location is the cytoplasm. It is found in the cytoskeleton. The protein localises to the cilium basal body. Functionally, scaffold subunit of some HBO1 complexes, which have a histone H4 acetyltransferase activity. Plays a key role in HBO1 complex by directing KAT7/HBO1 specificity towards histone H4 acetylation (H4K5ac, H4K8ac and H4K12ac), regulating DNA replication initiation, regulating DNA replication initiation. May also promote acetylation of nucleosomal histone H4 by KAT5. Promotes apoptosis. May act as a renal tumor suppressor. Negatively regulates canonical Wnt signaling; at least in part, cooperates with NPHP4 in this function. The chain is Protein Jade-1 (Jade1) from Mus musculus (Mouse).